A 213-amino-acid chain; its full sequence is Putative manganese efflux pump MntP (213 aa).

The next 6 membrane-spanning stretches (helical) occupy residues 3-23, 36-56, 67-87, 130-150, 152-172, and 187-207; these read ILSI…VSVA, ALKV…IGWG, AFDH…MIFE, LAIA…FLGI, IVQT…LGVI, and IVGG…HTGI.

This sequence belongs to the MntP (TC 9.B.29) family.

It is found in the cell membrane. Functionally, probably functions as a manganese efflux pump. This chain is Putative manganese efflux pump MntP, found in Clostridium perfringens (strain ATCC 13124 / DSM 756 / JCM 1290 / NCIMB 6125 / NCTC 8237 / Type A).